Here is a 224-residue protein sequence, read N- to C-terminus: uncharacterized protein (224 aa).

The helical transmembrane segment at 21 to 41 (LTVILIIPIVYLGVCGCFEIV) threads the bilayer.

The protein resides in the membrane. This is an uncharacterized protein from Methanocaldococcus jannaschii (strain ATCC 43067 / DSM 2661 / JAL-1 / JCM 10045 / NBRC 100440) (Methanococcus jannaschii).